The primary structure comprises 131 residues: Small ribosomal subunit protein uS11 (131 aa).

The protein belongs to the universal ribosomal protein uS11 family. As to quaternary structure, part of the 30S ribosomal subunit. Interacts with proteins S7 and S18. Binds to IF-3.

Functionally, located on the platform of the 30S subunit, it bridges several disparate RNA helices of the 16S rRNA. Forms part of the Shine-Dalgarno cleft in the 70S ribosome. The polypeptide is Small ribosomal subunit protein uS11 (Cellvibrio japonicus (strain Ueda107) (Pseudomonas fluorescens subsp. cellulosa)).